Here is a 462-residue protein sequence, read N- to C-terminus: Fumarate hydratase class II (462 aa).

Substrate contacts are provided by residues 97-99 (SGT), 127-130 (HPND), 137-139 (SSN), and T185. H186 functions as the Proton donor/acceptor in the catalytic mechanism. The active site involves S316. Substrate-binding positions include S317 and 322–324 (KVN).

The protein belongs to the class-II fumarase/aspartase family. Fumarase subfamily. Homotetramer.

The protein localises to the cytoplasm. It catalyses the reaction (S)-malate = fumarate + H2O. It participates in carbohydrate metabolism; tricarboxylic acid cycle; (S)-malate from fumarate: step 1/1. Involved in the TCA cycle. Catalyzes the stereospecific interconversion of fumarate to L-malate. The polypeptide is Fumarate hydratase class II (Bacillus subtilis (strain 168)).